The chain runs to 179 residues: Large ribosomal subunit protein uL6 (179 aa).

The protein belongs to the universal ribosomal protein uL6 family. In terms of assembly, part of the 50S ribosomal subunit.

In terms of biological role, this protein binds to the 23S rRNA, and is important in its secondary structure. It is located near the subunit interface in the base of the L7/L12 stalk, and near the tRNA binding site of the peptidyltransferase center. In Prochlorococcus marinus (strain MIT 9211), this protein is Large ribosomal subunit protein uL6.